A 341-amino-acid chain; its full sequence is Spindle assembly checkpoint protein BUB3 (341 aa).

WD repeat units follow at residues 9–48 (APKDYISDIKIIPSKSLLLITSWDGSLTVYKFDIQAKNVD), 54–96 (RYKH…QALT), 97–137 (NNEA…DGVI), 144–185 (SNNT…DDNG), 191–233 (GLKY…YNSS), 249–288 (NLAYPVNSIEFSPRHKFLYTAGSDGIISCWNLQTRKKIKN), and 292–329 (FNEDSVVKIACSDNILCLATSDDTFKTNAAIDQTIELN).

Belongs to the WD repeat BUB3 family. In terms of assembly, component of the mitotic checkpoint complex (MCC) which consists of MAD2, MAD3, BUB3 and CDC20. Part of complex consisting of MAD1, BUB1 and BUB3 after activation of spindle checkpoint. Part of the BUB1-BUB3 complex, composed of BUB1 and BUB3. Interacts with SPC105 (via phosphorylated MELT motifs); the interaction is direct and occurs when part of the BUB1-BUB3 complex. Interacts with MAD3; the interaction is direct. In terms of processing, phosphorylated by BUB1.

It localises to the nucleus. It is found in the chromosome. The protein localises to the centromere. Its subcellular location is the kinetochore. Involved in mitotic spindle assembly checkpoint signaling, a process that delays anaphase until chromosomes are bioriented on the spindle, and in the repair of incorrect mitotic kinetochore-spindle microtubule attachments. Component of the mitotic checkpoint complex (MCC) which inhibits the ubiquitin ligase activity of the anaphase promoting complex/cyclosome (APC/C) by preventing its activation by CDC20. The sequence is that of Spindle assembly checkpoint protein BUB3 (BUB3) from Saccharomyces cerevisiae (strain ATCC 204508 / S288c) (Baker's yeast).